Consider the following 123-residue polypeptide: Large ribosomal subunit protein bL12 (123 aa).

This sequence belongs to the bacterial ribosomal protein bL12 family. Homodimer. Part of the ribosomal stalk of the 50S ribosomal subunit. Forms a multimeric L10(L12)X complex, where L10 forms an elongated spine to which 2 to 4 L12 dimers bind in a sequential fashion. Binds GTP-bound translation factors.

In terms of biological role, forms part of the ribosomal stalk which helps the ribosome interact with GTP-bound translation factors. Is thus essential for accurate translation. This chain is Large ribosomal subunit protein bL12, found in Mycoplasmopsis synoviae (strain 53) (Mycoplasma synoviae).